Consider the following 84-residue polypeptide: Large ribosomal subunit protein bL27 (84 aa).

The interval 1–22 (MAHKKGASSTRNGRDSNAQRLG) is disordered. A compositionally biased stretch (polar residues) spans 7–19 (ASSTRNGRDSNAQ).

Belongs to the bacterial ribosomal protein bL27 family.

The sequence is that of Large ribosomal subunit protein bL27 from Streptomyces avermitilis (strain ATCC 31267 / DSM 46492 / JCM 5070 / NBRC 14893 / NCIMB 12804 / NRRL 8165 / MA-4680).